A 345-amino-acid chain; its full sequence is Phosphoribosylformylglycinamidine cyclo-ligase (345 aa).

Belongs to the AIR synthase family.

The protein resides in the cytoplasm. The enzyme catalyses 2-formamido-N(1)-(5-O-phospho-beta-D-ribosyl)acetamidine + ATP = 5-amino-1-(5-phospho-beta-D-ribosyl)imidazole + ADP + phosphate + H(+). It participates in purine metabolism; IMP biosynthesis via de novo pathway; 5-amino-1-(5-phospho-D-ribosyl)imidazole from N(2)-formyl-N(1)-(5-phospho-D-ribosyl)glycinamide: step 2/2. This Limosilactobacillus fermentum (strain NBRC 3956 / LMG 18251) (Lactobacillus fermentum) protein is Phosphoribosylformylglycinamidine cyclo-ligase.